Consider the following 100-residue polypeptide: Small ribosomal subunit protein bS6 (100 aa).

Belongs to the bacterial ribosomal protein bS6 family.

Functionally, binds together with bS18 to 16S ribosomal RNA. The sequence is that of Small ribosomal subunit protein bS6 from Enterococcus faecalis (strain ATCC 700802 / V583).